A 156-amino-acid chain; its full sequence is ATP synthase subunit b (156 aa).

The chain crosses the membrane as a helical span at residues 7-27 (LVAQMVVFFILWWVVAKFIWP).

It belongs to the ATPase B chain family. As to quaternary structure, F-type ATPases have 2 components, F(1) - the catalytic core - and F(0) - the membrane proton channel. F(1) has five subunits: alpha(3), beta(3), gamma(1), delta(1), epsilon(1). F(0) has three main subunits: a(1), b(2) and c(10-14). The alpha and beta chains form an alternating ring which encloses part of the gamma chain. F(1) is attached to F(0) by a central stalk formed by the gamma and epsilon chains, while a peripheral stalk is formed by the delta and b chains.

The protein localises to the cell inner membrane. F(1)F(0) ATP synthase produces ATP from ADP in the presence of a proton or sodium gradient. F-type ATPases consist of two structural domains, F(1) containing the extramembraneous catalytic core and F(0) containing the membrane proton channel, linked together by a central stalk and a peripheral stalk. During catalysis, ATP synthesis in the catalytic domain of F(1) is coupled via a rotary mechanism of the central stalk subunits to proton translocation. Its function is as follows. Component of the F(0) channel, it forms part of the peripheral stalk, linking F(1) to F(0). In Ralstonia pickettii (strain 12J), this protein is ATP synthase subunit b.